A 624-amino-acid chain; its full sequence is Na(+)/H(+) antiporter NhaA (624 aa).

Residues 1–164 (MNPELPPNHL…TFFINGRRYD (164 aa)) form a unknown region. The tract at residues 165 to 624 (GPWDVRSLSE…NAQAEEEKNP (460 aa)) is na(+)/H(+) antiporter NhaA. 11 helical membrane passes run 199–219 (GIMLLLATALAVVLSNSALGP), 240–260 (LSLRHWINDGLLVIFFLVVGL), 279–299 (LPIAAAIGGMAVPALLYLILV), 319–339 (GWGVPMATDTAFAIALIAMMG), 348–368 (VFLTAAAIVDDIGAIIVVAIF), 371–391 (GELHIAYLGSAVAIAGLLALL), 407–427 (IVLWVFVYASGIHATLAGIIL), 497–517 (FLVLPVFALANAGVVVETSVF), 521–541 (IPLMLGTATALVIGKPLGFIT), 565–585 (GAGALAGIGFTMSLFIASQAF), and 596–616 (IAIFGGSILSAIIGVAILWNA).

It belongs to the NhaA Na(+)/H(+) (TC 2.A.33) antiporter family.

The protein localises to the cell inner membrane. The enzyme catalyses Na(+)(in) + 2 H(+)(out) = Na(+)(out) + 2 H(+)(in). In terms of biological role, na(+)/H(+) antiporter that extrudes sodium in exchange for external protons. The sequence is that of Na(+)/H(+) antiporter NhaA from Nitrosospira multiformis (strain ATCC 25196 / NCIMB 11849 / C 71).